A 411-amino-acid chain; its full sequence is METCASFRLSPALLTSSTKIYDHVKSHLKSAMIQFSDLNTTPVMSIISNMGSAGIVTFQLTGAVSDTETLAEITEPLAFRNHSFGGTYLHSREFFGKEIEDILVRFYKRASTASKLPEFVETKITYNNSITETRHTSTVDSHVSPVEKYLQKCFVKAKLILSIKTCTMLQKWLRQNKNKSPVARLHINETLTVLVVTVGDECTTIEFKSFVLEPADAFLTLDKPGNFGAVLVDCTAVVNLECLIQAIGICKVPSVCVPAFKFYSGGIVEVSSAHLKQSKSPSATVSTVLLDASESLKQPAEQEQPTTSQPSDPQSSNSVDKPSPPRPSISQPVRRRAPPRAIISDSEEDSDSDSDQDCSTETQPETSYREEPKKFTPKPTAPPNKRKQFEPLKCPVEKKKKSNSNSFVSII.

Positions 296–411 (LKQPAEQEQP…SNSNSFVSII (116 aa)) are disordered. Positions 304–318 (QPTTSQPSDPQSSNS) are enriched in low complexity. Acidic residues predominate over residues 345-358 (DSEEDSDSDSDQDC).

The protein belongs to the herpesviridae DNA polymerase accessory subunit family.

Its function is as follows. Increases the processivity of the viral polymerase, probably by acting as a sliding clamp that prevents dissociation of the polymerase from the active template. The protein is DNA polymerase processivity factor (59) of Alcelaphine herpesvirus 1 (strain C500) (AlHV-1).